Consider the following 248-residue polypeptide: Triosephosphate isomerase (248 aa).

Residue 9–11 (NWK) coordinates substrate. The active-site Electrophile is histidine 94. Glutamate 166 serves as the catalytic Proton acceptor. Residues glycine 172, serine 212, and 233-234 (GG) contribute to the substrate site.

This sequence belongs to the triosephosphate isomerase family. Homodimer.

The protein resides in the cytoplasm. It carries out the reaction D-glyceraldehyde 3-phosphate = dihydroxyacetone phosphate. Its pathway is carbohydrate biosynthesis; gluconeogenesis. The protein operates within carbohydrate degradation; glycolysis; D-glyceraldehyde 3-phosphate from glycerone phosphate: step 1/1. In terms of biological role, involved in the gluconeogenesis. Catalyzes stereospecifically the conversion of dihydroxyacetone phosphate (DHAP) to D-glyceraldehyde-3-phosphate (G3P). This is Triosephosphate isomerase from Clostridium perfringens (strain ATCC 13124 / DSM 756 / JCM 1290 / NCIMB 6125 / NCTC 8237 / Type A).